Consider the following 315-residue polypeptide: Hydroxysteroid 11-beta-dehydrogenase 1-like protein (315 aa).

An N-terminal signal peptide occupies residues 1 to 15 (MKVLLLTGLGALFFA). Residues 36 to 62 (GANA…TAHT), 87 to 88 (DM), and 114 to 116 (NHI) each bind NADP(+). Ser-165 lines the substrate pocket. Catalysis depends on Tyr-178, which acts as the Proton acceptor. NADP(+) is bound by residues 178–182 (YSAAK) and 211–217 (GLRDRAS). Positions 221–286 (AVRSSTSRPR…SKTEKNDGHL (66 aa)) are disordered. A compositionally biased stretch (basic and acidic residues) spans 277–286 (SKTEKNDGHL).

The protein belongs to the short-chain dehydrogenases/reductases (SDR) family. As to expression, highly expressed in the brain.

The protein resides in the secreted. The enzyme catalyses cortisone + NADPH + H(+) = cortisol + NADP(+). Its function is as follows. Unidirectional NADP(+)-dependent cortisol dehydrogenase (in vitro). This Homo sapiens (Human) protein is Hydroxysteroid 11-beta-dehydrogenase 1-like protein (HSD11B1L).